The following is a 286-amino-acid chain: Phosphoribosylaminoimidazole-succinocarboxamide synthase (286 aa).

The protein belongs to the SAICAR synthetase family.

It carries out the reaction 5-amino-1-(5-phospho-D-ribosyl)imidazole-4-carboxylate + L-aspartate + ATP = (2S)-2-[5-amino-1-(5-phospho-beta-D-ribosyl)imidazole-4-carboxamido]succinate + ADP + phosphate + 2 H(+). Its pathway is purine metabolism; IMP biosynthesis via de novo pathway; 5-amino-1-(5-phospho-D-ribosyl)imidazole-4-carboxamide from 5-amino-1-(5-phospho-D-ribosyl)imidazole-4-carboxylate: step 1/2. This is Phosphoribosylaminoimidazole-succinocarboxamide synthase from Histophilus somni (strain 2336) (Haemophilus somnus).